A 451-amino-acid polypeptide reads, in one-letter code: UPF0210 protein Cbei_2352 (451 aa).

The protein belongs to the UPF0210 family. Homodimer.

This Clostridium beijerinckii (strain ATCC 51743 / NCIMB 8052) (Clostridium acetobutylicum) protein is UPF0210 protein Cbei_2352.